The chain runs to 260 residues: MAEELAGVRSGVVVSPHSDLSVDVLVLRISQQHNSSRRIDPRLSDGASEEISLVAAQAPQALPVSDVHFGGGTPTIIKPEDFLALMDLLRRSFAFRKTATIAVEIEPRTFTAEMAEALGAAEVSHVSLGVQSFDPIVQKATNRVQRKAQTTAAIENLRRIGISRINFDLMYGLPHQTVQSCVQSATAAVAMRPDRLAVFGYAHVPSYRKNQRLIDETALPDIAARAEQAVAVAETYLPNGAGAVAVLASLPLAAKSQPVL.

The Radical SAM core domain occupies 6-239 (AGVRSGVVVS…VAVAETYLPN (234 aa)).

This is an uncharacterized protein from Sinorhizobium fredii (strain NBRC 101917 / NGR234).